We begin with the raw amino-acid sequence, 177 residues long: Large ribosomal subunit protein bL19 (177 aa).

It belongs to the bacterial ribosomal protein bL19 family.

This protein is located at the 30S-50S ribosomal subunit interface and may play a role in the structure and function of the aminoacyl-tRNA binding site. The chain is Large ribosomal subunit protein bL19 from Rhizobium meliloti (strain 1021) (Ensifer meliloti).